Consider the following 129-residue polypeptide: Small ribosomal subunit protein uS9 (129 aa).

This sequence belongs to the universal ribosomal protein uS9 family.

The sequence is that of Small ribosomal subunit protein uS9 from Helicobacter pylori (strain Shi470).